The sequence spans 359 residues: uncharacterized protein (359 aa).

Positions 73 to 88 (AATAGTTPATGASGSA) are enriched in low complexity. Residues 73–93 (AATAGTTPATGASGSARPTDA) are disordered. Positions 179–354 (PSTCRGDNVS…AFSAAIQAGE (176 aa)) constitute a Macro domain.

This is an uncharacterized protein from Mycobacterium tuberculosis (strain ATCC 25618 / H37Rv).